The primary structure comprises 120 residues: Small ribosomal subunit protein eS17 (120 aa).

Belongs to the eukaryotic ribosomal protein eS17 family. In terms of assembly, component of the small ribosomal subunit.

It is found in the cytoplasm. This Encephalitozoon cuniculi (strain GB-M1) (Microsporidian parasite) protein is Small ribosomal subunit protein eS17 (RPS17).